The chain runs to 224 residues: Holliday junction branch migration complex subunit RuvA (224 aa).

Residues 1 to 67 are domain I; sequence MISWLKGEKV…EDGTSLYGFI (67 aa). A domain II region spans residues 68–146; that stretch reads EVNQRDLFRE…RFTDNDKTIH (79 aa). Residues 147 to 155 form a flexible linker region; it reads ENKKGIEAN. The segment at 156-224 is domain III; that stretch reads QFSKYIDEIY…ILMKLSEKTT (69 aa).

This sequence belongs to the RuvA family. In terms of assembly, homotetramer. Forms an RuvA(8)-RuvB(12)-Holliday junction (HJ) complex. HJ DNA is sandwiched between 2 RuvA tetramers; dsDNA enters through RuvA and exits via RuvB. An RuvB hexamer assembles on each DNA strand where it exits the tetramer. Each RuvB hexamer is contacted by two RuvA subunits (via domain III) on 2 adjacent RuvB subunits; this complex drives branch migration. In the full resolvosome a probable DNA-RuvA(4)-RuvB(12)-RuvC(2) complex forms which resolves the HJ.

It localises to the cytoplasm. Its function is as follows. The RuvA-RuvB-RuvC complex processes Holliday junction (HJ) DNA during genetic recombination and DNA repair, while the RuvA-RuvB complex plays an important role in the rescue of blocked DNA replication forks via replication fork reversal (RFR). RuvA specifically binds to HJ cruciform DNA, conferring on it an open structure. The RuvB hexamer acts as an ATP-dependent pump, pulling dsDNA into and through the RuvAB complex. HJ branch migration allows RuvC to scan DNA until it finds its consensus sequence, where it cleaves and resolves the cruciform DNA. The polypeptide is Holliday junction branch migration complex subunit RuvA (Prochlorococcus marinus (strain NATL1A)).